Reading from the N-terminus, the 113-residue chain is UPF0342 protein SZO_10960 (113 aa).

The protein belongs to the UPF0342 family.

This chain is UPF0342 protein SZO_10960, found in Streptococcus equi subsp. zooepidemicus (strain H70).